A 397-amino-acid polypeptide reads, in one-letter code: CCA-adding enzyme (397 aa).

2 residues coordinate ATP: Gly26 and Arg29. Gly26 and Arg29 together coordinate CTP. Positions 39 and 41 each coordinate Mg(2+). ATP contacts are provided by Arg110, Asp153, Arg156, Arg159, and Arg162. CTP-binding residues include Arg110, Asp153, Arg156, Arg159, and Arg162.

This sequence belongs to the tRNA nucleotidyltransferase/poly(A) polymerase family. Bacterial CCA-adding enzyme type 3 subfamily. Homodimer. Mg(2+) serves as cofactor.

It carries out the reaction a tRNA precursor + 2 CTP + ATP = a tRNA with a 3' CCA end + 3 diphosphate. The catalysed reaction is a tRNA with a 3' CCA end + 2 CTP + ATP = a tRNA with a 3' CCACCA end + 3 diphosphate. Functionally, catalyzes the addition and repair of the essential 3'-terminal CCA sequence in tRNAs without using a nucleic acid template. Adds these three nucleotides in the order of C, C, and A to the tRNA nucleotide-73, using CTP and ATP as substrates and producing inorganic pyrophosphate. tRNA 3'-terminal CCA addition is required both for tRNA processing and repair. Also involved in tRNA surveillance by mediating tandem CCA addition to generate a CCACCA at the 3' terminus of unstable tRNAs. While stable tRNAs receive only 3'-terminal CCA, unstable tRNAs are marked with CCACCA and rapidly degraded. The chain is CCA-adding enzyme from Bacillus mycoides (strain KBAB4) (Bacillus weihenstephanensis).